A 200-amino-acid polypeptide reads, in one-letter code: Nucleoside triphosphate pyrophosphatase (200 aa).

The active-site Proton acceptor is the D79.

It belongs to the Maf family. A divalent metal cation is required as a cofactor.

It localises to the cytoplasm. It carries out the reaction a ribonucleoside 5'-triphosphate + H2O = a ribonucleoside 5'-phosphate + diphosphate + H(+). The catalysed reaction is a 2'-deoxyribonucleoside 5'-triphosphate + H2O = a 2'-deoxyribonucleoside 5'-phosphate + diphosphate + H(+). Functionally, nucleoside triphosphate pyrophosphatase. May have a dual role in cell division arrest and in preventing the incorporation of modified nucleotides into cellular nucleic acids. The sequence is that of Nucleoside triphosphate pyrophosphatase from Legionella pneumophila (strain Paris).